Reading from the N-terminus, the 137-residue chain is Methylglyoxal synthase (137 aa).

Residues 1-137 (MKIALIAHDK…NLVRGGEPNV (137 aa)) form the MGS-like domain. Residues His-8, Lys-12, 34 to 37 (TGTT), and 54 to 55 (SG) each bind substrate. The Proton donor/acceptor role is filled by Asp-60. Residue His-87 coordinates substrate.

The protein belongs to the methylglyoxal synthase family.

The catalysed reaction is dihydroxyacetone phosphate = methylglyoxal + phosphate. Its function is as follows. Catalyzes the formation of methylglyoxal from dihydroxyacetone phosphate. This Bacillus velezensis (strain DSM 23117 / BGSC 10A6 / LMG 26770 / FZB42) (Bacillus amyloliquefaciens subsp. plantarum) protein is Methylglyoxal synthase.